The primary structure comprises 211 residues: N-(5'-phosphoribosyl)anthranilate isomerase (211 aa).

Belongs to the TrpF family.

The catalysed reaction is N-(5-phospho-beta-D-ribosyl)anthranilate = 1-(2-carboxyphenylamino)-1-deoxy-D-ribulose 5-phosphate. It participates in amino-acid biosynthesis; L-tryptophan biosynthesis; L-tryptophan from chorismate: step 3/5. This chain is N-(5'-phosphoribosyl)anthranilate isomerase, found in Pseudomonas paraeruginosa (strain DSM 24068 / PA7) (Pseudomonas aeruginosa (strain PA7)).